The primary structure comprises 345 residues: Beta-ketoacyl-[acyl-carrier-protein] synthase III (345 aa).

Catalysis depends on residues cysteine 114 and histidine 272. The tract at residues 273–277 is ACP-binding; sequence QANQR. Residue asparagine 302 is part of the active site.

The protein belongs to the thiolase-like superfamily. FabH family. In terms of assembly, homodimer.

Its subcellular location is the cytoplasm. It carries out the reaction malonyl-[ACP] + acetyl-CoA + H(+) = 3-oxobutanoyl-[ACP] + CO2 + CoA. It functions in the pathway lipid metabolism; fatty acid biosynthesis. Its function is as follows. Catalyzes the condensation reaction of fatty acid synthesis by the addition to an acyl acceptor of two carbons from malonyl-ACP. Catalyzes the first condensation reaction which initiates fatty acid synthesis and may therefore play a role in governing the total rate of fatty acid production. Possesses both acetoacetyl-ACP synthase and acetyl transacylase activities. Its substrate specificity determines the biosynthesis of branched-chain and/or straight-chain of fatty acids. This chain is Beta-ketoacyl-[acyl-carrier-protein] synthase III, found in Rhodopirellula baltica (strain DSM 10527 / NCIMB 13988 / SH1).